Here is an 848-residue protein sequence, read N- to C-terminus: Oligopeptide transport ATP-binding protein OppF (848 aa).

The ABC transporter domain maps to 13 to 785 (VKALSMMFKV…PVHPYTRSLI (773 aa)). An ATP-binding site is contributed by 47–54 (GESGSGKS).

It belongs to the ABC transporter superfamily. As to quaternary structure, the complex is composed of two ATP-binding proteins (OppD and OppF), two transmembrane proteins (OppB and OppC) and a solute-binding protein (OppA).

It localises to the cell membrane. The enzyme catalyses a [peptide](out) + ATP + H2O = a [peptide](in) + ADP + phosphate + H(+). Functionally, part of the ABC transporter complex OppABCDF involved in the uptake of oligopeptides. Probably responsible for energy coupling to the transport system. The polypeptide is Oligopeptide transport ATP-binding protein OppF (oppF) (Mycoplasma genitalium (strain ATCC 33530 / DSM 19775 / NCTC 10195 / G37) (Mycoplasmoides genitalium)).